The chain runs to 876 residues: MKTAELRQAFLEYFQQQGHAIVPSSSLVPHDDPTLLFTNAGMNQFKDLFLGREERDYTRATSSQKCVRAGGKHNDLENVGYTARHHTFFEMLGNFSFGDYFKREAINFAWTFLTGEQHLNLPQEKLWVTVYAEDDEAFDIWNQEIGVPAERIVRIGDNKGARYASDNFWQMGDTGPCGPCTEIFFDHGPDVAGGPPGSPEEDGDRYIEIWNVVFMQYNRTADGEMLNLPKPSVDTGMGLERIAAVLQGVHSNYEIDLFQDLLKAASDILGGAATTEASLRVVADHIRSCAFLIADGVMPSNEGRGFVLRRIIRRAARHGNKLGATQPFFYKLTGALVELMGEAYPQLVSSRKQIEKVLLQEEEQFAKTLDKGLRLLEQDIAELKGTEIPGETVFTLYDTYGFPVDLTNDIARERGLTLDYEGYEKAMEAQRDRARAASKFGIDYNAAGITIEGKTEFTGYDHVDGHERIRTVLVNGEERNAEAGDECVVVLERTPFYAESGGQVGDTGLLTWSGGRFQVTDTRKEGDNHLHVGTLIEGELFPGLEVDARIDHARRERTKRNHSATHLLHAALRNILGEHVTQKGSLVDPDKLRFDFSHFEAVTPEQLREIERTVNEQILENTPVDIDITDMDTAKEKGAMALFGEKYGDVVRVLTMGTDKYSVELCGGTHVARTGDIGLFRITSESGISSGVRRIEAVTGLGALEWVDETERTLRETARLVKGTRDSVVDKVKQVLDRNRQLEKDVDALKAKLASSAGTDLAGSAVEVAGLKVVASEMEGADRKALMETADQLKNKLGEGVVVLATVEDGKVVLVAGVTKSATNRIKAGDLMKHLASLVDGKGGGRPDMAQGGGNDPSRLAEALAGVPAWVEQNIG.

Histidine 562, histidine 566, cysteine 666, and histidine 670 together coordinate Zn(2+).

The protein belongs to the class-II aminoacyl-tRNA synthetase family. Zn(2+) serves as cofactor.

The protein localises to the cytoplasm. It catalyses the reaction tRNA(Ala) + L-alanine + ATP = L-alanyl-tRNA(Ala) + AMP + diphosphate. In terms of biological role, catalyzes the attachment of alanine to tRNA(Ala) in a two-step reaction: alanine is first activated by ATP to form Ala-AMP and then transferred to the acceptor end of tRNA(Ala). Also edits incorrectly charged Ser-tRNA(Ala) and Gly-tRNA(Ala) via its editing domain. This Marinobacter nauticus (strain ATCC 700491 / DSM 11845 / VT8) (Marinobacter aquaeolei) protein is Alanine--tRNA ligase.